A 257-amino-acid chain; its full sequence is Thiazole synthase (257 aa).

Lys-95 (schiff-base intermediate with DXP) is an active-site residue. 1-deoxy-D-xylulose 5-phosphate contacts are provided by residues Gly-156, 182 to 183 (AG), and 204 to 205 (NT).

The protein belongs to the ThiG family. As to quaternary structure, homotetramer. Forms heterodimers with either ThiH or ThiS.

It is found in the cytoplasm. The catalysed reaction is [ThiS sulfur-carrier protein]-C-terminal-Gly-aminoethanethioate + 2-iminoacetate + 1-deoxy-D-xylulose 5-phosphate = [ThiS sulfur-carrier protein]-C-terminal Gly-Gly + 2-[(2R,5Z)-2-carboxy-4-methylthiazol-5(2H)-ylidene]ethyl phosphate + 2 H2O + H(+). It participates in cofactor biosynthesis; thiamine diphosphate biosynthesis. Its function is as follows. Catalyzes the rearrangement of 1-deoxy-D-xylulose 5-phosphate (DXP) to produce the thiazole phosphate moiety of thiamine. Sulfur is provided by the thiocarboxylate moiety of the carrier protein ThiS. In vitro, sulfur can be provided by H(2)S. The polypeptide is Thiazole synthase (Vibrio vulnificus (strain CMCP6)).